The chain runs to 94 residues: Small ribosomal subunit protein bS16c (94 aa).

The protein belongs to the bacterial ribosomal protein bS16 family.

The protein resides in the plastid. It localises to the chloroplast. This Phalaenopsis aphrodite subsp. formosana (Moth orchid) protein is Small ribosomal subunit protein bS16c.